The chain runs to 238 residues: 2-C-methyl-D-erythritol 4-phosphate cytidylyltransferase (238 aa).

This sequence belongs to the IspD/TarI cytidylyltransferase family. IspD subfamily.

It carries out the reaction 2-C-methyl-D-erythritol 4-phosphate + CTP + H(+) = 4-CDP-2-C-methyl-D-erythritol + diphosphate. The protein operates within isoprenoid biosynthesis; isopentenyl diphosphate biosynthesis via DXP pathway; isopentenyl diphosphate from 1-deoxy-D-xylulose 5-phosphate: step 2/6. Functionally, catalyzes the formation of 4-diphosphocytidyl-2-C-methyl-D-erythritol from CTP and 2-C-methyl-D-erythritol 4-phosphate (MEP). This is 2-C-methyl-D-erythritol 4-phosphate cytidylyltransferase from Shewanella amazonensis (strain ATCC BAA-1098 / SB2B).